A 689-amino-acid chain; its full sequence is Glycine--tRNA ligase beta subunit (689 aa).

It belongs to the class-II aminoacyl-tRNA synthetase family. In terms of assembly, tetramer of two alpha and two beta subunits.

It localises to the cytoplasm. The catalysed reaction is tRNA(Gly) + glycine + ATP = glycyl-tRNA(Gly) + AMP + diphosphate. The sequence is that of Glycine--tRNA ligase beta subunit from Shewanella baltica (strain OS185).